The following is a 185-amino-acid chain: Ribosome-recycling factor (185 aa).

This sequence belongs to the RRF family.

It is found in the cytoplasm. Its function is as follows. Responsible for the release of ribosomes from messenger RNA at the termination of protein biosynthesis. May increase the efficiency of translation by recycling ribosomes from one round of translation to another. This is Ribosome-recycling factor from Brevibacillus brevis (strain 47 / JCM 6285 / NBRC 100599).